The chain runs to 152 residues: Ribosome maturation factor RimP (152 aa).

This sequence belongs to the RimP family.

The protein localises to the cytoplasm. Functionally, required for maturation of 30S ribosomal subunits. This chain is Ribosome maturation factor RimP, found in Stutzerimonas stutzeri (strain A1501) (Pseudomonas stutzeri).